A 347-amino-acid polypeptide reads, in one-letter code: UDP-galactose/UDP-glucose transporter 5 (347 aa).

8 helical membrane-spanning segments follow: residues 17-37, 57-77, 116-136, 143-163, 177-197, 218-238, 247-267, and 293-313; these read LWKA…YGLL, LFLV…ALLA, VQTL…TLIM, FDYL…LFPA, TVWG…TSTF, ICSS…LPAV, CLFD…FISY, and CIWF…IVFG. The interval 325 to 347 is disordered; the sequence is SEKPPAAQELPRDEEAQPLKGNP.

It belongs to the nucleotide-sugar transporter family. UDP-galactose:UMP antiporter (TC 2.A.7.11) subfamily.

The protein localises to the membrane. Its function is as follows. Sugar transporter involved in the transport of nucleotide-sugars from cytoplasm into the Golgi and/or the endoplasmic reticulum. The protein is UDP-galactose/UDP-glucose transporter 5 of Arabidopsis thaliana (Mouse-ear cress).